A 98-amino-acid chain; its full sequence is RING finger protein Z (98 aa).

The span at M1 to Q10 shows a compositional bias: basic and acidic residues. The tract at residues M1–L26 is disordered. The N-myristoyl glycine; by host moiety is linked to residue G2. Positions Y11–A23 are enriched in polar residues. Residues C41 to C77 form an RING-type; atypical zinc finger. Positions P91–P94 match the PTAP/PSAP motif motif.

This sequence belongs to the arenaviridae Z protein family. In terms of assembly, interacts with protein NP; this interaction probably directs the encapsidated genome to budding sites. Interacts (via RING domain) with polymerase L; this interaction inhibits viral transcription and replication, Z partially blocks the product exit tunnel for the releasing nascent RNA product. Interacts with the glycoprotein complex; this interaction plays a role in virion budding. Interacts with host eIF4E; this interaction results in eIF4E reduced affinity for its substrate, the 5'-m7 G cap structure. Interacts (via late-budding domain) with host TSG101; this interaction is essential for budding and release of viral particles. Interacts with host RPLP0; this interaction may serve to load ribosome-like particles inside the virion. Interacts with host PML; this interaction induces PML bodies redistribution in the cytoplasm upon viral infection. Myristoylation is required for the role of RING finger protein Z in assembly and budding.

The protein resides in the virion. It is found in the host cytoplasm. It localises to the host perinuclear region. Its subcellular location is the host cell membrane. In terms of biological role, plays a crucial role in virion assembly and budding. Expressed late in the virus life cycle, it acts as an inhibitor of viral transcription and RNA synthesis by interacting with the viral polymerase L. Presumably recruits the NP encapsidated genome to cellular membranes at budding sites via direct interaction with NP. Plays critical roles in the final steps of viral release by interacting with host TSG101, a member of the vacuolar protein-sorting pathway and using other cellular host proteins involved in vesicle formation pathway. The budding of the virus progeny occurs after association of protein Z with the viral glycoprotein complex SSP-GP1-GP2 at the cell periphery, step that requires myristoylation of protein Z. Also selectively represses protein production by associating with host eIF4E. In cell-based minigenome assay, has an inhibitory effect on the ribonucleoprotein machinery (vRNP), which is responsible for the replication and transcription of the viral genome. This chain is RING finger protein Z, found in Chapare mammarenavirus (isolate Human/Bolivia/810419/2003).